A 178-amino-acid chain; its full sequence is uncharacterized protein (178 aa).

A signal peptide spans 1 to 23 (MTMFKKISVLFFTLILAGCSSWS).

This is an uncharacterized protein from Haemophilus influenzae (strain ATCC 51907 / DSM 11121 / KW20 / Rd).